Here is an 84-residue protein sequence, read N- to C-terminus: Cryptic plasmid protein A (84 aa).

In Neisseria gonorrhoeae, this protein is Cryptic plasmid protein A (cppA).